The following is a 371-amino-acid chain: Lipoyl synthase, mitochondrial (371 aa).

Residues 1-24 (MLSRFKCSRLQLQKRAISVTKATT) constitute a mitochondrion transit peptide. Polar residues predominate over residues 20–29 (TKATTTTASQ). The interval 20–42 (TKATTTTASQPKRRRTTTFSDAL) is disordered. Positions 107, 112, 118, 138, 142, 145, and 353 each coordinate [4Fe-4S] cluster. The Radical SAM core domain occupies 121–342 (GGDSSKATAT…RDKALELGFL (222 aa)).

This sequence belongs to the radical SAM superfamily. Lipoyl synthase family. It depends on [4Fe-4S] cluster as a cofactor.

It is found in the mitochondrion. It catalyses the reaction [[Fe-S] cluster scaffold protein carrying a second [4Fe-4S](2+) cluster] + N(6)-octanoyl-L-lysyl-[protein] + 2 oxidized [2Fe-2S]-[ferredoxin] + 2 S-adenosyl-L-methionine + 4 H(+) = [[Fe-S] cluster scaffold protein] + N(6)-[(R)-dihydrolipoyl]-L-lysyl-[protein] + 4 Fe(3+) + 2 hydrogen sulfide + 2 5'-deoxyadenosine + 2 L-methionine + 2 reduced [2Fe-2S]-[ferredoxin]. Its pathway is protein modification; protein lipoylation via endogenous pathway; protein N(6)-(lipoyl)lysine from octanoyl-[acyl-carrier-protein]: step 2/2. Catalyzes the radical-mediated insertion of two sulfur atoms into the C-6 and C-8 positions of the octanoyl moiety bound to the lipoyl domains of lipoate-dependent enzymes, thereby converting the octanoylated domains into lipoylated derivatives. This Lachancea thermotolerans (strain ATCC 56472 / CBS 6340 / NRRL Y-8284) (Yeast) protein is Lipoyl synthase, mitochondrial.